The following is a 750-amino-acid chain: Photosystem I P700 chlorophyll a apoprotein A1 (750 aa).

Transmembrane regions (helical) follow at residues 70-93, 156-179, 195-219, 291-309, 346-369, 385-411, 433-455, and 531-549; these read VFSA…FHGA, LYCT…FHYH, LNHH…HVSL, IAHH…GHMY, WHAQ…HHMY, LSLF…IFMV, AIIS…LYIH, and FLVH…LILL. Cysteine 573 and cysteine 582 together coordinate [4Fe-4S] cluster. Transmembrane regions (helical) follow at residues 589 to 610 and 664 to 686; these read HVFL…HFSW and LSAY…MFLF. Residue histidine 675 participates in chlorophyll a' binding. Residues methionine 683 and tyrosine 691 each contribute to the chlorophyll a site. A phylloquinone-binding site is contributed by tryptophan 692. Residues 724–744 form a helical membrane-spanning segment; it reads AVGVTHYLLGGIATTWAFFLA.

Belongs to the PsaA/PsaB family. As to quaternary structure, the PsaA/B heterodimer binds the P700 chlorophyll special pair and subsequent electron acceptors. PSI consists of a core antenna complex that captures photons, and an electron transfer chain that converts photonic excitation into a charge separation. The eukaryotic PSI reaction center is composed of at least 11 subunits. The cofactor is P700 is a chlorophyll a/chlorophyll a' dimer, A0 is one or more chlorophyll a, A1 is one or both phylloquinones and FX is a shared 4Fe-4S iron-sulfur center..

It is found in the plastid. The protein localises to the chloroplast thylakoid membrane. The catalysed reaction is reduced [plastocyanin] + hnu + oxidized [2Fe-2S]-[ferredoxin] = oxidized [plastocyanin] + reduced [2Fe-2S]-[ferredoxin]. Its function is as follows. PsaA and PsaB bind P700, the primary electron donor of photosystem I (PSI), as well as the electron acceptors A0, A1 and FX. PSI is a plastocyanin-ferredoxin oxidoreductase, converting photonic excitation into a charge separation, which transfers an electron from the donor P700 chlorophyll pair to the spectroscopically characterized acceptors A0, A1, FX, FA and FB in turn. Oxidized P700 is reduced on the lumenal side of the thylakoid membrane by plastocyanin. This is Photosystem I P700 chlorophyll a apoprotein A1 from Citrus sinensis (Sweet orange).